Here is a 340-residue protein sequence, read N- to C-terminus: DNA-directed RNA polymerase subunit alpha (340 aa).

Positions 1–233 (MIQNEIPIPA…NLFIPLLHEK (233 aa)) are alpha N-terminal domain (alpha-NTD). The alpha C-terminal domain (alpha-CTD) stretch occupies residues 263 to 340 (RKEISFKHIF…LPKNKFSIND (78 aa)).

It belongs to the RNA polymerase alpha chain family. As to quaternary structure, in plastids the minimal PEP RNA polymerase catalytic core is composed of four subunits: alpha, beta, beta', and beta''. When a (nuclear-encoded) sigma factor is associated with the core the holoenzyme is formed, which can initiate transcription.

The protein localises to the plastid. It localises to the chloroplast. It carries out the reaction RNA(n) + a ribonucleoside 5'-triphosphate = RNA(n+1) + diphosphate. DNA-dependent RNA polymerase catalyzes the transcription of DNA into RNA using the four ribonucleoside triphosphates as substrates. The polypeptide is DNA-directed RNA polymerase subunit alpha (rpoA) (Anthoceros angustus (Hornwort)).